A 66-amino-acid chain; its full sequence is DNA-directed RNA polymerase subunit Rpo10 (66 aa).

Cys7, Cys10, Cys44, and Cys45 together coordinate Zn(2+).

Belongs to the archaeal Rpo10/eukaryotic RPB10 RNA polymerase subunit family. As to quaternary structure, part of the RNA polymerase complex. Requires Zn(2+) as cofactor.

It is found in the cytoplasm. The enzyme catalyses RNA(n) + a ribonucleoside 5'-triphosphate = RNA(n+1) + diphosphate. Functionally, DNA-dependent RNA polymerase (RNAP) catalyzes the transcription of DNA into RNA using the four ribonucleoside triphosphates as substrates. The sequence is that of DNA-directed RNA polymerase subunit Rpo10 from Pyrobaculum neutrophilum (strain DSM 2338 / JCM 9278 / NBRC 100436 / V24Sta) (Thermoproteus neutrophilus).